The primary structure comprises 259 residues: MLGAIAYTGNKQSLLPELKSHFPKYNRFVDLFCGGLSVSLNVNGPVLANDIQEPIIEMYKRLINVSWDDVLKVIKQYKLSKTSKEEFLKLREDYNKTRDPLLLYVLHFHGFSNMIRINDKGNFTTPFGKRTINKNSEKQYNHFKQNCDKIIFSSLHFKDVKILDGDFVYVDPPYLITVADYNKFWSEDEEKDLLNLLDSLNDRGIKFGQSNVLEHHGKENTLLKEWSKKYNVKHLNKKYVFNIYHSKEKNGTDEVYIFN.

S-adenosyl-L-methionine contacts are provided by residues Tyr-7, Lys-11, 32-37, Asp-50, 156-157, Asp-171, and Tyr-181; these read FCGGLS and HF.

It belongs to the N(4)/N(6)-methyltransferase family. As to quaternary structure, monomer.

The catalysed reaction is a 2'-deoxyadenosine in DNA + S-adenosyl-L-methionine = an N(6)-methyl-2'-deoxyadenosine in DNA + S-adenosyl-L-homocysteine + H(+). Its function is as follows. An alpha subtype methylase, recognizes the double-stranded sequence 5'-GATC-3' and methylates A-2. Also acts on 5-hydroxymethylcytosine (hmC)-containing DNA, the normal base in this virus. May prevent degradation of viral DNA by the host restriction-modification antiviral defense system. The polypeptide is DNA adenine methylase (Enterobacteria phage T4 (Bacteriophage T4)).